A 155-amino-acid polypeptide reads, in one-letter code: MKLQLCAVGRLRSGPERDLVEDYLARFERTGRPLGLPPVQLLELEDRKGGGMEAEADLIAKAVAPGAALVILDERGRTLSSPEFADHLAHWRDSGRDVALAIGGADGLAPRLRDRADLAMSLGRMVWPHMLVRVMLAEQLYRAATILAGSPYHRV.

Residues Leu72, Gly103, and 122–127 (LGRMVW) each bind S-adenosyl-L-methionine.

It belongs to the RNA methyltransferase RlmH family. In terms of assembly, homodimer.

It is found in the cytoplasm. The enzyme catalyses pseudouridine(1915) in 23S rRNA + S-adenosyl-L-methionine = N(3)-methylpseudouridine(1915) in 23S rRNA + S-adenosyl-L-homocysteine + H(+). Functionally, specifically methylates the pseudouridine at position 1915 (m3Psi1915) in 23S rRNA. This chain is Ribosomal RNA large subunit methyltransferase H, found in Cereibacter sphaeroides (strain ATCC 17029 / ATH 2.4.9) (Rhodobacter sphaeroides).